A 151-amino-acid polypeptide reads, in one-letter code: Deoxyuridine 5'-triphosphate nucleotidohydrolase (151 aa).

Substrate contacts are provided by residues 70–72 (RSG), Asn-83, 87–89 (LID), and Met-97.

The protein belongs to the dUTPase family. It depends on Mg(2+) as a cofactor.

It carries out the reaction dUTP + H2O = dUMP + diphosphate + H(+). It functions in the pathway pyrimidine metabolism; dUMP biosynthesis; dUMP from dCTP (dUTP route): step 2/2. In terms of biological role, this enzyme is involved in nucleotide metabolism: it produces dUMP, the immediate precursor of thymidine nucleotides and it decreases the intracellular concentration of dUTP so that uracil cannot be incorporated into DNA. In Histophilus somni (strain 129Pt) (Haemophilus somnus), this protein is Deoxyuridine 5'-triphosphate nucleotidohydrolase.